A 490-amino-acid polypeptide reads, in one-letter code: Ribosomal L1 domain-containing protein 1 (490 aa).

At methionine 1 the chain carries N-acetylmethionine. Positions 1–27 are enriched in low complexity; it reads MEDSASASLSSAAATGTSTSTPAAPTA. The segment at 1-33 is disordered; that stretch reads MEDSASASLSSAAATGTSTSTPAAPTARKQLDK. Residues lysine 120 and lysine 254 each participate in a glycyl lysine isopeptide (Lys-Gly) (interchain with G-Cter in SUMO2) cross-link. The span at 280 to 293 shows a compositional bias: basic residues; it reads LNKKKKEARRKRRE. The stretch at 280-313 forms a coiled coil; it reads LNKKKKEARRKRRERNFEKQKERKKKRQQARKTA. The segment at 280 to 490 is disordered; the sequence is LNKKKKEARR…PKKPKVPQST (211 aa). Residues 329–343 are compositionally biased toward basic and acidic residues; sequence TVKKPESKKEQTPEH. A Phosphothreonine modification is found at threonine 340. A compositionally biased stretch (basic residues) spans 344-353; it reads GKKKRGRGKA. At threonine 358 the chain carries Phosphothreonine. Position 361 is a phosphoserine (serine 361). At threonine 375 the chain carries Phosphothreonine. Residues 376–385 show a composition bias toward basic and acidic residues; the sequence is PANEKVEIQK. A Glycyl lysine isopeptide (Lys-Gly) (interchain with G-Cter in SUMO2) cross-link involves residue lysine 380. Serine 392 and serine 396 each carry phosphoserine. Phosphothreonine is present on residues threonine 415 and threonine 423. Position 427 is a phosphoserine (serine 427). Basic and acidic residues predominate over residues 427–460; sequence SPEKKPKIKEEAVKEKSPSLGKKDARQTPKKPEA. Residue lysine 435 forms a Glycyl lysine isopeptide (Lys-Gly) (interchain with G-Cter in SUMO2) linkage. Residue serine 443 is modified to Phosphoserine. Residue lysine 461 forms a Glycyl lysine isopeptide (Lys-Gly) (interchain with G-Cter in SUMO2) linkage. A Phosphothreonine modification is found at threonine 465. Lysine 468 carries the N6-acetyllysine modification. Serine 469 carries the phosphoserine modification. The span at 469–490 shows a compositional bias: basic residues; sequence SVRKASHTPKKWPKKPKVPQST.

This sequence belongs to the universal ribosomal protein uL1 family. Highly divergent. In terms of assembly, interacts with ING1 (isoform 2). Interacts with KPNA7 and KPNA2. In terms of tissue distribution, expressed at high intensities in the heart, skeletal muscle, and placenta.

It is found in the nucleus. Its subcellular location is the nucleolus. In terms of biological role, regulates cellular senescence through inhibition of PTEN translation. Acts as a pro-apoptotic regulator in response to DNA damage. The protein is Ribosomal L1 domain-containing protein 1 (RSL1D1) of Homo sapiens (Human).